The chain runs to 354 residues: MHVAALQNHLAPLLVPCSRVYAACMAVRRRFWESPMSPAFRPSRPVVSVGNIAWGGTGKTPLVDWLLHWAGTRGLNPAVLTRGYGAKPPTVPFLVGSQHTAEEAGDEPLMLARRNPYAAVLVDPVRRRAGRWAEHELRPHFYLLDDGMQHLAVRRDLDLVVLRPDDVLDQWGRVLPAGSWREGASALKSATAFFVKSSPEVFEALAPVLEERLAPYGVPVFSFWLRPSGLLRVGGNEQRPHFDGAPYVLVSGVGGPGQVGETATRYFGYAPVRHRVFPDHHPYGPDDVRSLAQEGAQLVCTPKDAVKLERFAGLDLWTFDLQTVFGPAIGTAAPFPQWWDERWARLARERAGTS.

53 to 60 is a binding site for ATP; the sequence is AWGGTGKT.

Belongs to the LpxK family.

The catalysed reaction is a lipid A disaccharide + ATP = a lipid IVA + ADP + H(+). It functions in the pathway glycolipid biosynthesis; lipid IV(A) biosynthesis; lipid IV(A) from (3R)-3-hydroxytetradecanoyl-[acyl-carrier-protein] and UDP-N-acetyl-alpha-D-glucosamine: step 6/6. Functionally, transfers the gamma-phosphate of ATP to the 4'-position of a tetraacyldisaccharide 1-phosphate intermediate (termed DS-1-P) to form tetraacyldisaccharide 1,4'-bis-phosphate (lipid IVA). This chain is Tetraacyldisaccharide 4'-kinase, found in Nitratidesulfovibrio vulgaris (strain ATCC 29579 / DSM 644 / CCUG 34227 / NCIMB 8303 / VKM B-1760 / Hildenborough) (Desulfovibrio vulgaris).